Reading from the N-terminus, the 83-residue chain is Exodeoxyribonuclease 7 small subunit (83 aa).

It belongs to the XseB family. Heterooligomer composed of large and small subunits.

The protein localises to the cytoplasm. The catalysed reaction is Exonucleolytic cleavage in either 5'- to 3'- or 3'- to 5'-direction to yield nucleoside 5'-phosphates.. Its function is as follows. Bidirectionally degrades single-stranded DNA into large acid-insoluble oligonucleotides, which are then degraded further into small acid-soluble oligonucleotides. The sequence is that of Exodeoxyribonuclease 7 small subunit from Bradyrhizobium diazoefficiens (strain JCM 10833 / BCRC 13528 / IAM 13628 / NBRC 14792 / USDA 110).